Consider the following 547-residue polypeptide: Putative HMP/thiamine import ATP-binding protein YkoD (547 aa).

ABC transporter domains are found at residues 8 to 250 (LTVE…KLGI) and 295 to 523 (LEVS…KAKL). Residues 42 to 49 (GPSGCGKS) and 327 to 334 (GPNGTGKS) each bind ATP.

It belongs to the ABC transporter superfamily. As to quaternary structure, the complex is composed of two ATP-binding proteins (YkoD), two transmembrane proteins (YkoC and YkoE) and a solute-binding protein (YkoF).

It is found in the cell membrane. Part of the ABC transporter complex YkoCDEF that could transport hydroxymethylpyrimidine (HMP) and/or thiamine. Could also transport other HMP-containing products. Responsible for energy coupling to the transport system. This chain is Putative HMP/thiamine import ATP-binding protein YkoD (ykoD), found in Bacillus subtilis (strain 168).